The sequence spans 346 residues: GPALPP motifs-containing protein 1 (346 aa).

Disordered regions lie at residues 1-283 (MARD…ESLM) and 289-308 (KLKS…IPFD). An N-acetylalanine modification is found at Ala2. A GPALPP motif 1 motif is present at residues 7 to 12 (GPALPP). Position 28 is a phosphoserine (Ser28). The GPALPP motif 2 motif lies at 32 to 37 (GPALPP). A compositionally biased stretch (acidic residues) spans 60 to 69 (GNQESEEEDT). The short motif at 91 to 96 (GPALPP) is the GPALPP motif 3 element. Phosphoserine is present on Ser104. A compositionally biased stretch (pro residues) spans 106–115 (PRPIIGPALP). The GPALPP motif 4 signature appears at 111–116 (GPALPP). Basic and acidic residues predominate over residues 123–132 (QKNDKGREDP). A phosphoserine mark is found at Ser136, Ser141, and Ser146. Residues 142–152 (EEAESGEDEDI) are compositionally biased toward acidic residues. Composition is skewed to basic and acidic residues over residues 169–193 (EFEK…KPIT) and 233–267 (PADR…KRLA). Lys277 participates in a covalent cross-link: Glycyl lysine isopeptide (Lys-Gly) (interchain with G-Cter in SUMO2). Positions 293 to 308 (KAAEDKNKHQERIPFD) are enriched in basic and acidic residues. Lys314 is covalently cross-linked (Glycyl lysine isopeptide (Lys-Gly) (interchain with G-Cter in SUMO2)).

This Mus musculus (Mouse) protein is GPALPP motifs-containing protein 1 (Gpalpp1).